Reading from the N-terminus, the 370-residue chain is Protein Mut11 (370 aa).

Residues 1-22 form a disordered region; that stretch reads MARGPGDTDMDEASADAAIPSS. WD repeat units lie at residues 38 to 77, 80 to 119, 122 to 162, 165 to 204, 208 to 247, 262 to 301, and 329 to 370; these read GHTKAVAAVKFSPDGSLLASGSADRTVALWDAATGARVNT, GHSCGVSDVAWNPNGRYLATAADDHSLKLWDAETGACLRT, GHTN…CLRE, AHSDPVTSAAFSYDGSMVVTSSLDGLIRLWDTQTGHCLKT, RDSPPVSFAAFTPNAKYVLCNTLDGRAKLWDYAAGRTRRT, GFLGGSSSASFDLGCSMVVTGSEDGSLAAYDISTGHVVGR, and GHTA…PAAA.

Belongs to the WD repeat WDR5/wds family.

The protein resides in the nucleus. Its function is as follows. Part of a complex involved in 'Lys-4' histone H3 methylation. The polypeptide is Protein Mut11 (Mut11) (Chlamydomonas reinhardtii (Chlamydomonas smithii)).